Here is a 217-residue protein sequence, read N- to C-terminus: Large ribosomal subunit protein uL3 (217 aa).

It belongs to the universal ribosomal protein uL3 family. As to quaternary structure, part of the 50S ribosomal subunit. Forms a cluster with proteins L14 and L19.

Functionally, one of the primary rRNA binding proteins, it binds directly near the 3'-end of the 23S rRNA, where it nucleates assembly of the 50S subunit. In Mycobacterium marinum (strain ATCC BAA-535 / M), this protein is Large ribosomal subunit protein uL3.